Reading from the N-terminus, the 130-residue chain is Transcription antitermination protein NusB (130 aa).

This sequence belongs to the NusB family.

Functionally, involved in transcription antitermination. Required for transcription of ribosomal RNA (rRNA) genes. Binds specifically to the boxA antiterminator sequence of the ribosomal RNA (rrn) operons. This Bacillus mycoides (strain KBAB4) (Bacillus weihenstephanensis) protein is Transcription antitermination protein NusB.